The primary structure comprises 115 residues: NADH-ubiquinone oxidoreductase chain 3 (115 aa).

Helical transmembrane passes span 4–24, 55–75, and 87–107; these read LTALSVNIALSTCLIAIAFWL, FFLVAITFLLFDLEIALLLPL, and MMLTAFILVSVLALGLAYEWM.

Belongs to the complex I subunit 3 family. Core subunit of respiratory chain NADH dehydrogenase (Complex I) which is composed of 45 different subunits. Interacts with TMEM186. Interacts with TMEM242.

The protein resides in the mitochondrion inner membrane. The catalysed reaction is a ubiquinone + NADH + 5 H(+)(in) = a ubiquinol + NAD(+) + 4 H(+)(out). Functionally, core subunit of the mitochondrial membrane respiratory chain NADH dehydrogenase (Complex I) which catalyzes electron transfer from NADH through the respiratory chain, using ubiquinone as an electron acceptor. Essential for the catalytic activity of complex I. The chain is NADH-ubiquinone oxidoreductase chain 3 from Peromyscus boylii (Brush deermouse).